Reading from the N-terminus, the 210-residue chain is LexA repressor (210 aa).

Positions 25–44 (AGQVAQEVGITKQAISQQVN) form a DNA-binding region, H-T-H motif. Active-site for autocatalytic cleavage activity residues include S120 and K159.

Belongs to the peptidase S24 family. As to quaternary structure, homodimer.

It carries out the reaction Hydrolysis of Ala-|-Gly bond in repressor LexA.. Represses a number of genes involved in the response to DNA damage (SOS response), including recA and lexA. In the presence of single-stranded DNA, RecA interacts with LexA causing an autocatalytic cleavage which disrupts the DNA-binding part of LexA, leading to derepression of the SOS regulon and eventually DNA repair. This Deinococcus radiodurans (strain ATCC 13939 / DSM 20539 / JCM 16871 / CCUG 27074 / LMG 4051 / NBRC 15346 / NCIMB 9279 / VKM B-1422 / R1) protein is LexA repressor.